A 157-amino-acid chain; its full sequence is Crossover junction endodeoxyribonuclease RuvC (157 aa).

Catalysis depends on residues Asp-7, Glu-66, and Asp-139. Mg(2+) contacts are provided by Asp-7, Glu-66, and Asp-139.

Belongs to the RuvC family. In terms of assembly, homodimer which binds Holliday junction (HJ) DNA. The HJ becomes 2-fold symmetrical on binding to RuvC with unstacked arms; it has a different conformation from HJ DNA in complex with RuvA. In the full resolvosome a probable DNA-RuvA(4)-RuvB(12)-RuvC(2) complex forms which resolves the HJ. Mg(2+) serves as cofactor.

It is found in the cytoplasm. It carries out the reaction Endonucleolytic cleavage at a junction such as a reciprocal single-stranded crossover between two homologous DNA duplexes (Holliday junction).. In terms of biological role, the RuvA-RuvB-RuvC complex processes Holliday junction (HJ) DNA during genetic recombination and DNA repair. Endonuclease that resolves HJ intermediates. Cleaves cruciform DNA by making single-stranded nicks across the HJ at symmetrical positions within the homologous arms, yielding a 5'-phosphate and a 3'-hydroxyl group; requires a central core of homology in the junction. The consensus cleavage sequence is 5'-(A/T)TT(C/G)-3'. Cleavage occurs on the 3'-side of the TT dinucleotide at the point of strand exchange. HJ branch migration catalyzed by RuvA-RuvB allows RuvC to scan DNA until it finds its consensus sequence, where it cleaves and resolves the cruciform DNA. This is Crossover junction endodeoxyribonuclease RuvC from Helicobacter pylori (strain ATCC 700392 / 26695) (Campylobacter pylori).